Here is a 395-residue protein sequence, read N- to C-terminus: uncharacterized protein (395 aa).

A disordered region spans residues 247–270; it reads GGTVVPPNPDQPNPTPPDSSSPNY. Residues 252–265 are compositionally biased toward pro residues; sequence PPNPDQPNPTPPDS.

This is an uncharacterized protein from Vibrio cholerae serotype O1 (strain ATCC 39315 / El Tor Inaba N16961).